The primary structure comprises 451 residues: Probable plasmid replicative DNA helicase (451 aa).

Residues 194–451 (QNSFFDAFPT…SKFSAIKKVW (258 aa)) form the SF4 helicase domain. Residue 225-232 (ARPSIGKT) coordinates ATP.

The protein belongs to the helicase family. DnaB subfamily. In terms of assembly, homohexamer.

It carries out the reaction Couples ATP hydrolysis with the unwinding of duplex DNA at the replication fork by translocating in the 5'-3' direction. This creates two antiparallel DNA single strands (ssDNA). The leading ssDNA polymer is the template for DNA polymerase III holoenzyme which synthesizes a continuous strand.. The catalysed reaction is ATP + H2O = ADP + phosphate + H(+). A replicative DNA helicase, it participates in initiation and elongation during DNA replication. Travels ahead of the DNA replisome, separating dsDNA into templates for DNA synthesis. A processive ATP-dependent 5'-3' DNA helicase it has DNA-dependent ATPase activity. Its function is as follows. The plasmid this protein is encoded on is thought to be required for growth within mammalian cells. The chain is Probable plasmid replicative DNA helicase from Chlamydia trachomatis serovar L2 (strain ATCC VR-902B / DSM 19102 / 434/Bu).